The sequence spans 472 residues: Chromosomal replication initiator protein DnaA (472 aa).

The domain I, interacts with DnaA modulators stretch occupies residues 1–73; it reads MSNMEQDRWS…LSCWQAELPE (73 aa). The segment at 73 to 128 is domain II; sequence EVNRVDLTVRSPVRCAAPAKEAPAPVESRRDEQRPSAERSNGATPVSANHDALGGS. A disordered region spans residues 89-124; that stretch reads APAKEAPAPVESRRDEQRPSAERSNGATPVSANHDA. The segment covering 99–109 has biased composition (basic and acidic residues); sequence ESRRDEQRPSA. Residues 110–119 are compositionally biased toward polar residues; that stretch reads ERSNGATPVS. Positions 129–351 are domain III, AAA+ region; the sequence is PLDPRLTFAS…GAINRLLAHS (223 aa). ATP contacts are provided by G176, G178, K179, and T180. The segment at 352-472 is domain IV, binds dsDNA; it reads KLNNQPVTLE…VESLKRQLQE (121 aa).

The protein belongs to the DnaA family. Oligomerizes as a right-handed, spiral filament on DNA at oriC.

It localises to the cytoplasm. Its function is as follows. Plays an essential role in the initiation and regulation of chromosomal replication. ATP-DnaA binds to the origin of replication (oriC) to initiate formation of the DNA replication initiation complex once per cell cycle. Binds the DnaA box (a 9 base pair repeat at the origin) and separates the double-stranded (ds)DNA. Forms a right-handed helical filament on oriC DNA; dsDNA binds to the exterior of the filament while single-stranded (ss)DNA is stabiized in the filament's interior. The ATP-DnaA-oriC complex binds and stabilizes one strand of the AT-rich DNA unwinding element (DUE), permitting loading of DNA polymerase. After initiation quickly degrades to an ADP-DnaA complex that is not apt for DNA replication. Binds acidic phospholipids. The sequence is that of Chromosomal replication initiator protein DnaA from Rhodopseudomonas palustris (strain TIE-1).